The chain runs to 398 residues: Cholinephosphotransferase 1 (398 aa).

A2 is modified (N-acetylalanine). At 2–62 (AAGAGARPAP…LLQWIPLWMA (61 aa)) the chain is on the cytoplasmic side. Residues 63-83 (PNTITLIGLAINLVTTLVLIF) traverse the membrane as a helical segment. Position 64 (N64) interacts with CDP-choline. Residues 84-93 (YCPTVTEEAP) lie on the Lumenal side of the membrane. A helical transmembrane segment spans residues 94-118 (YWTYLLCALGLFIYQSLDAIDGKQA). Mg(2+) contacts are provided by D111 and D114. R119 is a binding site for CDP-choline. Residues 119–125 (RRTNSCS) are Cytoplasmic-facing. Residues 126-150 (PLGELFDHGCDSLSTVFMAIGASIA) traverse the membrane as a helical segment. D132 contributes to the Mg(2+) binding site. The Proton acceptor role is filled by H133. Mg(2+) is bound at residue D136. At 151–160 (VRLGTHPDWL) the chain is on the lumenal side. Residues 161–179 (FFCSFVGMFMFYCAHWQTY) traverse the membrane as a helical segment. Residues 180-190 (VSGVLRFGRVD) are Cytoplasmic-facing. The chain crosses the membrane as a helical span at residues 191-207 (VTEIQVALVIVFMLSTF). The Lumenal segment spans residues 208–222 (GGATMWDYTIPILEI). Residues 223–248 (KLKIVPVLGVVGGLIFSCSNYFHVIL) form a helical membrane-spanning segment. Residues 249-265 (HGGVGKNGSTIAGTSVL) lie on the Cytoplasmic side of the membrane. A helical transmembrane segment spans residues 266–281 (SPGLHIGLIIILAIMI). Topologically, residues 282–293 (YKKSATNMFEKH) are lumenal. The chain crosses the membrane as a helical span at residues 294–316 (PCLYTLMFGCVFAKVAQKLVIAH). Topologically, residues 317–329 (MTKSELYLQDTVF) are cytoplasmic. The chain crosses the membrane as a helical span at residues 330–339 (IGPGLLFLDQ). Residues 340–346 (YFNNFID) are Lumenal-facing. A helical transmembrane segment spans residues 347 to 376 (EYVVLWIAMVISSFDMMIYFTSLCLQISRH). Residues 377 to 398 (LHLNIFKTSCQQAPEQVYKHID) lie on the Cytoplasmic side of the membrane.

Belongs to the CDP-alcohol phosphatidyltransferase class-I family. Mg(2+) is required as a cofactor. Mn(2+) serves as cofactor. Expressed in brain, heart, lung, liver, spleen, intestine and muscle. Down-regulated in kidney of type 2 diabetic KK/Ta mice.

Its subcellular location is the golgi apparatus membrane. The catalysed reaction is CDP-choline + a 1,2-diacyl-sn-glycerol = a 1,2-diacyl-sn-glycero-3-phosphocholine + CMP + H(+). The enzyme catalyses 1-octadecanoyl-2-(5Z,8Z,11Z,14Z-eicosatetraenoyl)-sn-glycerol + CDP-choline = 1-octadecanoyl-2-(5Z,8Z,11Z,14Z-eicosatetraenoyl)-sn-glycero-3-phosphocholine + CMP + H(+). It carries out the reaction 1-hexadecanoyl-2-(9Z-octadecenoyl)-sn-glycerol + CDP-choline = 1-hexadecanoyl-2-(9Z-octadecenoyl)-sn-glycero-3-phosphocholine + CMP + H(+). It catalyses the reaction 1-hexadecanoyl-2-(4Z,7Z,10Z,13Z,16Z,19Z-docosahexaenoyl)-sn-glycerol + CDP-choline = 1-hexadecanoyl-2-(4Z,7Z,10Z,13Z,16Z,19Z-docosahexaenoyl)-sn-glycero-3-phosphocholine + CMP + H(+). The catalysed reaction is 1,2-dioctanoyl-sn-glycerol + CDP-choline = 1,2-dioctanoyl-sn-glycero-3-phosphocholine + CMP + H(+). Its pathway is phospholipid metabolism; phosphatidylcholine biosynthesis; phosphatidylcholine from phosphocholine: step 2/2. Catalyzes the final step of de novo phosphatidylcholine (PC) synthesis, i.e. the transfer of choline phosphate from CDP-choline to the free hydroxyl of a diacylglycerol (DAG), producing a PC. It thereby plays a central role in the formation and maintenance of vesicular membranes. This chain is Cholinephosphotransferase 1, found in Mus musculus (Mouse).